The chain runs to 733 residues: Protein PAT1 homolog 2 (733 aa).

Disordered stretches follow at residues 42-75 (LDQE…PEAL) and 337-366 (LHPQ…PDPY). A compositionally biased stretch (basic and acidic residues) spans 49-59 (EPVKLEDDHTK). Low complexity predominate over residues 346–356 (SQRQRPQSSSR).

This sequence belongs to the PAT1 family. As to quaternary structure, interacts with ribonucleoprotein complex components. Interacts with cpeb. Oocyte-specific protein. Expressed throughout oogenesis but is not detectable in eggs, embryos, nor in adult tissues (at protein level).

It localises to the cytoplasm. The protein resides in the nucleus. In terms of biological role, RNA-binding protein that acts as a translational repressor. When overexpressed, able to disperse P-bodies. The protein is Protein PAT1 homolog 2 (patl2) of Xenopus laevis (African clawed frog).